Consider the following 479-residue polypeptide: Transcriptional regulator ERG (479 aa).

Residues 34-47 show a composition bias toward polar residues; the sequence is TASSSSDYGQTSKM. Disordered regions lie at residues 34–56 and 72–92; these read TASS…QQDW and PSQV…KGGK. Ser48, Ser81, and Ser96 each carry phosphoserine. A PNT domain is found at 113-199; it reads MPPPNMTTNE…SHLHYLRETP (87 aa). Residues 242 to 293 are disordered; sequence QRITTRPDLPYEPPRRSAWTGHGHPTPQSKAAQPSPSTVPKTEDQRPQLDPY. A compositionally biased stretch (polar residues) spans 267–281; the sequence is TPQSKAAQPSPSTVP. Residue Lys282 forms a Glycyl lysine isopeptide (Lys-Gly) (interchain with G-Cter in SUMO2) linkage. A DNA-binding region (ETS) is located at residues 311–391; that stretch reads IQLWQFLLEL…HGKRYAYKFD (81 aa).

Belongs to the ETS family. As to quaternary structure, identified in a IGF2BP1-dependent mRNP granule complex containing untranslated mRNAs. Interacts with SETDB1.

Its subcellular location is the nucleus. The protein localises to the cytoplasm. Transcriptional regulator. May participate in transcriptional regulation through the recruitment of SETDB1 histone methyltransferase and subsequent modification of local chromatin structure. The protein is Transcriptional regulator ERG (ERG) of Homo sapiens (Human).